The chain runs to 153 residues: Regulator of ribonuclease activity B (153 aa).

Residues 114 to 153 (DPNADDDEYGDDGEFLDDEDEYGDDGEFFDDEDEEEPRVH) form a disordered region. A compositionally biased stretch (acidic residues) spans 115–153 (PNADDDEYGDDGEFLDDEDEYGDDGEFFDDEDEEEPRVH).

The protein belongs to the RraB family. In terms of assembly, interacts with the C-terminal region of Rne.

It is found in the cytoplasm. Functionally, globally modulates RNA abundance by binding to RNase E (Rne) and regulating its endonucleolytic activity. Can modulate Rne action in a substrate-dependent manner by altering the composition of the degradosome. In Haemophilus influenzae (strain ATCC 51907 / DSM 11121 / KW20 / Rd), this protein is Regulator of ribonuclease activity B.